We begin with the raw amino-acid sequence, 1507 residues long: MSTHDMNHHPPRKSHSKRDKPSSSNSGPKIENHKCKWAWQKVFETGKSFLRRDGFPQDCKSKEDFERIKRTGVRKTSENMLEDPRKNFESLQQSSVYQTNSFRNPRYLCRAHLRVDSYYCTIPPKREVSLFNMDDNCTEVLLRDFAKDCGKVEKAYVCIHPETKRHMKMAYVKFATVKEAHNFYSMYHAQNLLATKCTPRIDPFLSILNEEYEVATNGQVLPILPDDLASIDPSVLRDLRANFLRDQNEKYELAMRNTYEDEGGMLSGVIMDTSDHYERDYTMDHDVGPSSMKMSPIPPPPIKEESPPPPPPPPVASVSNLAPVPSVQLPYYNNIQPSSSTMHMPEFRPTEPPPSYSREDPYRSTSRSSLSRHRNRSRSPSDGMDRSGRSSSRRTHRRPESRNGSKNANGDVVKYETYKMEKRKIKYEGGNKKYEQVHIKERTAVIRGKNQLENVSSESASGSSSVDTYPDFSDEERKKKKRPKSPNRSKKDSRAFGWDSTDESDEDTRRRRSGRSQNRSSERKFQTTSSSSTRRELSSTHTNSVPNLKSHETPPPPPPKGHPSVHLQTPYQHVQPQMIPATYYNLPPQHMAPPPITTSLPPFCDFSQPPPGFTPTFKPITNAPLPTPYQASNIPQPGLVQIAALSAAPEPFSSIPGPPPGPAPIQEDVGRAESPEKPSLSERFSGIFGPTQREEPAQVEVEYDYPLKHSESHDDRHSLEDMDVEVSSDGETVSNVEKIECMEEKKRQDLERIAIARTPIVKKCKKRMMDELSRKVAEDIRQQIMRQCFAALDEKLHLKAIADEEKRKKEREEKARQEAEKPSNHLIADMMTLYNNQSFASSSRGFYRKQKPIPKSHPKHQEHHHHAKASVSTPVHSSSTSRNSSVAPTPQRTVSTSSSSSSAATSARVSEDESDSDSTPGEVQRRKTSVLSNDKRRRRASFSSTSIQSSPERQRDVSSSSRTSSSSSTSSMKQEETADEKSRKRKLIMSSDESSTTGSTATSVVSSRQSSLEPQQEKTDGEPPKKKSQTDFISERVSKIEGEERPLPEPVETSGPIIGDSSYLPYKIVHWEKAGIIEMNLPANSIRAHEYHPFTTEHCYFGIDDPRQPKIQIFDHSPCKSEPGSEPLKITPAPWGPIDNVAETGPLIYMDVVTAPKTVQKKQKPRKQVFEKDPYEYYEPPPTKRPAPPPRFKKTFKPRSEEEKKKIIGDCEDLPDLEDQWYLRAALNEMQSEVKSADELPWKKMLTFKEMLRSEDPLLRLNPIRSKKGLPDAFYEDEELDGVIPVAAGCSRARPYEKMTMKQKRSLVRRPDNESHPTAIFSERDETAIRHQHLASKDMRLLQRRLLTSLGDANNDFFKINQLKFRKKMIKFARSRIHGWGLYAMESIAPDEMIVEYIGQTIRSLVAEEREKAYERRGIGSSYLFRIDLHHVIDATKRGNFARFINHSCQPNCYAKVLTIEGEKRIVIYSRTIIKKGEEITYDYKFPIEDDKIDCLCGAKTCRGYLN.

The tract at residues 1–32 is disordered; that stretch reads MSTHDMNHHPPRKSHSKRDKPSSSNSGPKIEN. The segment covering 9–18 has biased composition (basic residues); it reads HPPRKSHSKR. The RRM domain maps to 128–199; it reads VSLFNMDDNC…QNLLATKCTP (72 aa). Disordered regions lie at residues 280 to 578, 650 to 697, 803 to 826, 842 to 1058, and 1163 to 1199; these read DYTM…QPQM, EPFS…EEPA, DEEK…SNHL, SSRG…GPII, and QKPR…FKPR. Residues 296–315 are compositionally biased toward pro residues; that stretch reads PIPPPPIKEESPPPPPPPPV. The span at 316–327 shows a compositional bias: low complexity; sequence ASVSNLAPVPSV. Residues 331–342 show a composition bias toward polar residues; that stretch reads YYNNIQPSSSTM. The segment covering 413 to 444 has biased composition (basic and acidic residues); sequence VKYETYKMEKRKIKYEGGNKKYEQVHIKERTA. Over residues 456–465 the composition is skewed to low complexity; that stretch reads SSESASGSSS. Residues 478-488 are compositionally biased toward basic residues; sequence KKKKRPKSPNR. The segment covering 566-575 has biased composition (polar residues); it reads HLQTPYQHVQ. Composition is skewed to basic and acidic residues over residues 668 to 680 and 803 to 823; these read DVGR…KPSL and DEEK…EKPS. Residues 846–868 are compositionally biased toward basic residues; the sequence is FYRKQKPIPKSHPKHQEHHHHAK. A compositionally biased stretch (low complexity) spans 869–908; sequence ASVSTPVHSSSTSRNSSVAPTPQRTVSTSSSSSSAATSAR. The span at 941-951 shows a compositional bias: polar residues; the sequence is SFSSTSIQSSP. A compositionally biased stretch (low complexity) spans 958–971; it reads SSSSRTSSSSSTSS. The segment covering 973–982 has biased composition (basic and acidic residues); it reads KQEETADEKS. Positions 990-1007 are enriched in low complexity; that stretch reads SSDESSTTGSTATSVVSS. Residues 1015–1047 show a composition bias toward basic and acidic residues; the sequence is QQEKTDGEPPKKKSQTDFISERVSKIEGEERPL. The segment covering 1179-1190 has biased composition (pro residues); sequence EPPPTKRPAPPP. The RxxxRR motif signature appears at 1340-1345; the sequence is RLLQRR. The 118-residue stretch at 1368-1485 folds into the SET domain; the sequence is KMIKFARSRI…KGEEITYDYK (118 aa). Tyrosine 1484 lines the S-adenosyl-L-methionine pocket. Positions 1491-1507 constitute a Post-SET domain; sequence DKIDCLCGAKTCRGYLN.

This sequence belongs to the class V-like SAM-binding methyltransferase superfamily. As to quaternary structure, component of the Set1C/COMPASS complex (also known as the SET2 complex), which contains at least set-2, swd-2.1, cfp-1, rbbp-5, wdr-5.1, dpy-30 and ash-2. In terms of tissue distribution, expressed in all cells of embryo. In L1 larva, it is predominantly expressed in Z2 and Z3 primordial germ cells. In adults, it is predominantly expressed in the germline.

It localises to the nucleus. The enzyme catalyses L-lysyl(4)-[histone H3] + 3 S-adenosyl-L-methionine = N(6),N(6),N(6)-trimethyl-L-lysyl(4)-[histone H3] + 3 S-adenosyl-L-homocysteine + 3 H(+). It catalyses the reaction N(6)-methyl-L-lysyl(4)-[histone H3] + S-adenosyl-L-methionine = N(6),N(6)-dimethyl-L-lysyl(4)-[histone H3] + S-adenosyl-L-homocysteine + H(+). It carries out the reaction N(6),N(6)-dimethyl-L-lysyl(4)-[histone H3] + S-adenosyl-L-methionine = N(6),N(6),N(6)-trimethyl-L-lysyl(4)-[histone H3] + S-adenosyl-L-homocysteine + H(+). Catalytic component of the COMPASS (Set1C) complex that specifically mono-, di- and trimethylates histone H3 to form H3K4me1/2/3. Binds RNAs which might negatively affect its histone methyltransferase activity. COMPASS recognizes ubiquitinated H2B on one face of the nucleosome which stimulates the methylation of H3 on the opposing face. H3 'Lys-4' methylation represents a specific tag for epigenetic transcriptional activation. Implicated in the epigenetic inheritance of lifespan over several generations. Acts in the germline to limit the longevity of the soma, probably by regulating a lipid metabolism pathway that signals from the germline to the intestine, thereby preventing accumulation of mono-unsaturated fatty acids. Methylation in the germline is required for germline development and fertility, possibly by ensuring genome stability. May act redundantly with mes-3 and mes-4 proteins in the development of a fertile germline. Required for RNAi. Functions as an antagonist of hpl-1 and hpl-2 activity in growth and somatic gonad development. Cooperates with jmjd-3.1 and egl-27 to ensure robust transdifferentiation of the Y rectal cell to the PDA motor neuron during larval development. In Caenorhabditis elegans, this protein is Histone-lysine N-methyltransferase set-2 (set-2).